A 115-amino-acid chain; its full sequence is Aspartate 1-decarboxylase (115 aa).

S25 acts as the Schiff-base intermediate with substrate; via pyruvic acid in catalysis. S25 bears the Pyruvic acid (Ser) mark. Residue T57 coordinates substrate. The Proton donor role is filled by Y58. Substrate is bound at residue 73–75; sequence GPA.

Belongs to the PanD family. In terms of assembly, heterooctamer of four alpha and four beta subunits. Pyruvate serves as cofactor. In terms of processing, is synthesized initially as an inactive proenzyme, which is activated by self-cleavage at a specific serine bond to produce a beta-subunit with a hydroxyl group at its C-terminus and an alpha-subunit with a pyruvoyl group at its N-terminus.

The protein localises to the cytoplasm. The catalysed reaction is L-aspartate + H(+) = beta-alanine + CO2. It functions in the pathway cofactor biosynthesis; (R)-pantothenate biosynthesis; beta-alanine from L-aspartate: step 1/1. In terms of biological role, catalyzes the pyruvoyl-dependent decarboxylation of aspartate to produce beta-alanine. The sequence is that of Aspartate 1-decarboxylase from Cytophaga hutchinsonii (strain ATCC 33406 / DSM 1761 / CIP 103989 / NBRC 15051 / NCIMB 9469 / D465).